Reading from the N-terminus, the 183-residue chain is U3 small nucleolar ribonucleoprotein protein imp3 (183 aa).

The S4 RNA-binding domain maps to 108–174; sequence RRLPVVMRNI…IKKHVMDYNN (67 aa).

It belongs to the universal ribosomal protein uS4 family. Component of a heterotrimeric complex containing imp3, imp4 and mpp10.

The protein resides in the nucleus. The protein localises to the nucleolus. Component of the U3 small nucleolar ribonucleoprotein. Required for the early cleavages at sites A0, A1 and A2 during 18S ribosomal pre-RNA processing. The chain is U3 small nucleolar ribonucleoprotein protein imp3 from Caenorhabditis elegans.